The primary structure comprises 218 residues: MHRSPLAWLRLLLAAVLGAFLLGGPLHAAETAAPRSPAWAQAVDPSINLYRMSPTLYRSALPNAQSVALLQRLQVKTVVSFIKDDDRAWLGQAPVRVVSLPTHADRVDDAEVLSVLRQLQAAEREGPVLMHCKHGNNRTGLFAAMYRIVVQGWDKQAALEEMQRGGFGDEDDMRDASAYVRGADVDGLRLAMANGECSPSRFALCHVREWMAQALDRP.

A signal peptide spans 1-28 (MHRSPLAWLRLLLAAVLGAFLLGGPLHA). Positions 44–188 (DPSINLYRMS…YVRGADVDGL (145 aa)) constitute a Tyrosine-protein phosphatase domain. Residue Asp-105 is the Proton donor/acceptor of the active site. Cys-132 serves as the catalytic Phosphocysteine intermediate.

This sequence belongs to the protein-tyrosine phosphatase family. Monomer in solution.

It localises to the periplasm. The catalysed reaction is O-phospho-L-tyrosyl-[protein] + H2O = L-tyrosyl-[protein] + phosphate. It catalyses the reaction O-phospho-L-threonyl-[protein] + H2O = L-threonyl-[protein] + phosphate. It carries out the reaction O-phospho-L-seryl-[protein] + H2O = L-seryl-[protein] + phosphate. With respect to regulation, the phosphatase activity is completely inhibited by trisodium orthovanadate, a tyrosine phosphatase specific inhibitor. Its function is as follows. Phosphatase that regulates diverse phenotypes in P.aeruginosa via regulation of the concentration of cellular c-di-GMP. Acts by dephosphorylating the membrane-anchored diguanylate cyclase TpbB at tyrosine and serine/threonine sites, leading to inactivation of TpbB and reduced c-di-GMP production. The reduced cellular c-di-GMP concentration leads to reduced adhesin expression, reduced extracellular polysaccharide (EPS) production, pellicule production, cell aggregation and biofilm formation, and enhanced swimming and swarming. It affects colony morphology and controls rugose colony formation. TpbA also acts as a positive regulator of extracellular DNA (eDNA, a major component of the biofilm matrix) and cell lysis by reducing c-di-GMP concentrations. In vitro shows phosphatase activity toward p-nitrophenyl phosphate (pNPP), tyrosine phosphopeptides and a threonine phosphopeptide. Does not have phosphodiesterases (PDE) activity, and cannot degrade c-di-GMP. The protein is Dual specificity protein phosphatase TpbA of Pseudomonas aeruginosa (strain UCBPP-PA14).